Reading from the N-terminus, the 524-residue chain is Lysophospholipid acyltransferase LPCAT4 (524 aa).

2 helical membrane-spanning segments follow: residues cysteine 40–tryptophan 62 and threonine 87–leucine 107. The HXXXXD motif motif lies at histidine 129–aspartate 134. The N-linked (GlcNAc...) asparagine glycan is linked to asparagine 152. Residues proline 490–aspartate 524 form a disordered region. Positions serine 495–alanine 518 are enriched in polar residues.

This sequence belongs to the 1-acyl-sn-glycerol-3-phosphate acyltransferase family. Widely expressed with much higher level in brain. Expressed in erythroleukemic cells but not in reticulocytes.

The protein localises to the endoplasmic reticulum membrane. The catalysed reaction is a 1-acyl-sn-glycero-3-phosphoethanolamine + an acyl-CoA = a 1,2-diacyl-sn-glycero-3-phosphoethanolamine + CoA. It carries out the reaction a 1-O-(1Z-alkenyl)-sn-glycero-3-phosphoethanolamine + an acyl-CoA = a 1-O-(1Z-alkenyl)-2-acyl-sn-glycero-3-phosphoethanolamine + CoA. The enzyme catalyses a 1-acyl-sn-glycero-3-phosphocholine + an acyl-CoA = a 1,2-diacyl-sn-glycero-3-phosphocholine + CoA. It catalyses the reaction a 1-O-alkyl-sn-glycero-3-phosphocholine + acetyl-CoA = a 1-O-alkyl-2-acetyl-sn-glycero-3-phosphocholine + CoA. The catalysed reaction is a 1-acyl-sn-glycero-3-phospho-L-serine + an acyl-CoA = a 1,2-diacyl-sn-glycero-3-phospho-L-serine + CoA. It carries out the reaction octanoyl-CoA + a 1-acyl-sn-glycero-3-phosphoethanolamine = 1-acyl-2-octanoyl-sn-glycero-3-phosphoethanolamine + CoA. The enzyme catalyses a 1-acyl-sn-glycero-3-phosphoethanolamine + hexadecanoyl-CoA = 1-acyl-2-hexadecanoyl-sn-glycero-3-phosphoethanolamine + CoA. It catalyses the reaction a 1-acyl-sn-glycero-3-phosphoethanolamine + octadecanoyl-CoA = 1-acyl-2-octadecanoyl-sn-glycero-3-phosphoethanolamine + CoA. The catalysed reaction is a 1-acyl-sn-glycero-3-phosphoethanolamine + (9Z)-octadecenoyl-CoA = 1-acyl-2-(9Z)-octadecenoyl-sn-glycero-3-phosphoethanolamine + CoA. It carries out the reaction a 1-acyl-sn-glycero-3-phosphoethanolamine + (5Z,8Z,11Z,14Z)-eicosatetraenoyl-CoA = 1-acyl-2-(5Z,8Z,11Z,14Z)-eicosatetraenoyl-sn-glycero-3-phosphoethanolamine + CoA. The enzyme catalyses a 1-O-(1Z-alkenyl)-sn-glycero-3-phosphoethanolamine + octanoyl-CoA = 1-O-(1Z)-alkenyl-2-octanoyl-sn-glycero-3-phosphoethanolamine + CoA. It catalyses the reaction a 1-O-(1Z-alkenyl)-sn-glycero-3-phosphoethanolamine + hexadecanoyl-CoA = 1-O-(1Z)-alkenyl-2-hexadecanoyl-sn-glycero-3-phosphoethanolamine + CoA. The catalysed reaction is a 1-O-(1Z-alkenyl)-sn-glycero-3-phosphoethanolamine + octadecanoyl-CoA = 1-O-(1Z)-alkenyl-2-octadecanoyl-sn-glycero-3-phosphoethanolamine + CoA. It carries out the reaction a 1-O-(1Z-alkenyl)-sn-glycero-3-phosphoethanolamine + (9Z)-octadecenoyl-CoA = 1-O-(1Z)-alkenyl-2-(9Z)-octadecenoyl-sn-glycero-3-phosphoethanolamine + CoA. The enzyme catalyses a 1-O-(1Z-alkenyl)-sn-glycero-3-phosphoethanolamine + (5Z,8Z,11Z,14Z)-eicosatetraenoyl-CoA = 1-O-(1Z)-alkenyl-2-(5Z,8Z,11Z,14Z)-eicosatetraenoyl-sn-glycero-3-phosphoethanolamine + CoA. It catalyses the reaction a 1-acyl-sn-glycero-3-phosphocholine + hexadecanoyl-CoA = 1-acyl-2-hexadecanoyl-sn-glycero-3-phosphocholine + CoA. The catalysed reaction is a 1-acyl-sn-glycero-3-phosphocholine + (9Z)-octadecenoyl-CoA = a 1-acyl-2-(9Z)-octadecenoyl-sn-glycero-3-phosphocholine + CoA. It carries out the reaction 1-O-hexadecyl-sn-glycero-3-phosphocholine + (9Z)-octadecenoyl-CoA = 1-O-hexadecyl-2-(9Z)-octadecenoyl-sn-glycero-3-phosphocholine + CoA. The enzyme catalyses 1-O-hexadecyl-sn-glycero-3-phosphocholine + (5Z,8Z,11Z,14Z)-eicosatetraenoyl-CoA = 1-O-hexadecyl-2-(5Z,8Z,11Z,14Z)-eicosatetraenoyl-sn-glycero-3-phosphocholine + CoA. It catalyses the reaction 1-hexadecanoyl-sn-glycero-3-phospho-L-serine + (9Z)-octadecenoyl-CoA = 1-hexadecanoyl-2-(9Z-octadecenoyl)-sn-glycero-3-phospho-L-serine + CoA. The catalysed reaction is 1-octadecanoyl-sn-glycero-3-phospho-(1'-sn-glycerol) + (9Z)-octadecenoyl-CoA = 1-octadecanoyl-2-(9Z-octadecenoyl)-sn-glycero-3-phospho-(1'-sn-glycerol) + CoA. It carries out the reaction 1-octadecanoyl-sn-glycero-3-phospho-(1'-sn-glycerol) + (5Z,8Z,11Z,14Z)-eicosatetraenoyl-CoA = 1-octadecanoyl-2-(5Z,8Z,11Z,14Z-eicosatetraenoyl)-sn-glycero-3-phospho-(1'-sn-glycerol) + CoA. It participates in lipid metabolism; phospholipid metabolism. In terms of biological role, displays acyl-CoA-dependent lysophospholipid acyltransferase activity with a subset of lysophospholipids as substrates; converts lysophosphatidylethanolamine to phosphatidylethanolamine, 1-alkenyl-lysophatidylethanolamine to 1-alkenyl-phosphatidylethanolamine, lysophosphatidylglycerol and alkyl-lysophosphatidylcholine to phosphatidylglycerol and alkyl-phosphatidylcholine, respectively. In contrast, has no lysophosphatidylinositol, glycerol-3-phosphate, diacylglycerol or lysophosphatidic acid acyltransferase activity. Prefers long chain acyl-CoAs (C16, C18) as acyl donors. Converts lysophosphatidylcholine to phosphatidycholine. The protein is Lysophospholipid acyltransferase LPCAT4 (Lpcat4) of Mus musculus (Mouse).